The primary structure comprises 99 residues: uncharacterized protein (99 aa).

The first 17 residues, 1–17 (MMMNSFFPAMALMVLVG), serve as a signal peptide directing secretion. A lipid anchor (N-palmitoyl cysteine) is attached at C18. Residue C18 is the site of S-diacylglycerol cysteine attachment.

Its subcellular location is the cell membrane. This is an uncharacterized protein from Escherichia coli O157:H7.